The chain runs to 285 residues: Phosphatidylserine decarboxylase proenzyme (285 aa).

Active-site charge relay system; for autoendoproteolytic cleavage activity residues include aspartate 89, histidine 146, and serine 252. Serine 252 acts as the Schiff-base intermediate with substrate; via pyruvic acid; for decarboxylase activity in catalysis. At serine 252 the chain carries Pyruvic acid (Ser); by autocatalysis.

This sequence belongs to the phosphatidylserine decarboxylase family. PSD-B subfamily. Prokaryotic type I sub-subfamily. As to quaternary structure, heterodimer of a large membrane-associated beta subunit and a small pyruvoyl-containing alpha subunit. Requires pyruvate as cofactor. Is synthesized initially as an inactive proenzyme. Formation of the active enzyme involves a self-maturation process in which the active site pyruvoyl group is generated from an internal serine residue via an autocatalytic post-translational modification. Two non-identical subunits are generated from the proenzyme in this reaction, and the pyruvate is formed at the N-terminus of the alpha chain, which is derived from the carboxyl end of the proenzyme. The autoendoproteolytic cleavage occurs by a canonical serine protease mechanism, in which the side chain hydroxyl group of the serine supplies its oxygen atom to form the C-terminus of the beta chain, while the remainder of the serine residue undergoes an oxidative deamination to produce ammonia and the pyruvoyl prosthetic group on the alpha chain. During this reaction, the Ser that is part of the protease active site of the proenzyme becomes the pyruvoyl prosthetic group, which constitutes an essential element of the active site of the mature decarboxylase.

It localises to the cell membrane. The enzyme catalyses a 1,2-diacyl-sn-glycero-3-phospho-L-serine + H(+) = a 1,2-diacyl-sn-glycero-3-phosphoethanolamine + CO2. The protein operates within phospholipid metabolism; phosphatidylethanolamine biosynthesis; phosphatidylethanolamine from CDP-diacylglycerol: step 2/2. Its function is as follows. Catalyzes the formation of phosphatidylethanolamine (PtdEtn) from phosphatidylserine (PtdSer). The sequence is that of Phosphatidylserine decarboxylase proenzyme from Vibrio cholerae serotype O1 (strain ATCC 39541 / Classical Ogawa 395 / O395).